We begin with the raw amino-acid sequence, 89 residues long: Large ribosomal subunit protein eL43 (89 aa).

Residues 1-28 form a disordered region; that stretch reads MVKKSKVGSTGRFGARYGRKAKRTVKDI. The C4-type zinc finger occupies 38–59; that stretch reads CPKCDRPGVKRTHAGIWKCRKC.

Belongs to the eukaryotic ribosomal protein eL43 family. It depends on Zn(2+) as a cofactor.

The sequence is that of Large ribosomal subunit protein eL43 from Methanosphaera stadtmanae (strain ATCC 43021 / DSM 3091 / JCM 11832 / MCB-3).